The primary structure comprises 289 residues: MDIGLREWLIVIGLIVIAGILFDGWRRMRGGKGKLKFKLDRSFANLPDDDGDSAELLGPARVVEHREPSFDEQDLPSVSARETKERKGGKRQEEPRQGDLDLDEGLALEADPSDAAEPVEPRKGKSKGRKEKEREKAPAVAAEPAPVDEVLIINVIARDESGFKGPALLQNILESGLRFGDMDIFHRHESMAGNGEILFSMANAVKPGTFDLDDIDNFSTRAVSFFLGLPGPRHPKQAFDVMVAAARKLAHELNGELKDEQRSVLTAQTIEHYRQRIIDHERRSLMQKR.

Residue M1 is a topological domain, periplasmic. A helical membrane pass occupies residues 2–22 (DIGLREWLIVIGLIVIAGILF). The Cytoplasmic portion of the chain corresponds to 23 to 289 (DGWRRMRGGK…HERRSLMQKR (267 aa)). Residues 65 to 141 (HREPSFDEQD…KEREKAPAVA (77 aa)) form a disordered region. Residues 81-99 (RETKERKGGKRQEEPRQGD) are compositionally biased toward basic and acidic residues. The span at 100 to 114 (LDLDEGLALEADPSD) shows a compositional bias: acidic residues.

It belongs to the ZipA family. As to quaternary structure, interacts with FtsZ via their C-terminal domains.

It is found in the cell inner membrane. Functionally, essential cell division protein that stabilizes the FtsZ protofilaments by cross-linking them and that serves as a cytoplasmic membrane anchor for the Z ring. Also required for the recruitment to the septal ring of downstream cell division proteins. In Pseudomonas aeruginosa (strain UCBPP-PA14), this protein is Cell division protein ZipA.